The chain runs to 215 residues: Vesicle-trafficking protein SEC22b-A (215 aa).

The Cytoplasmic segment spans residues 1–190 (MVLQTMIVRV…RSDAKYLNTR (190 aa)). A Longin domain is found at 6–119 (MIVRVADSLP…YSFIEFDTYI (114 aa)). In terms of domain architecture, v-SNARE coiled-coil homology spans 134 to 194 (NLGNINSELH…KYLNTRSTYA (61 aa)). A helical membrane pass occupies residues 191–213 (STYAKVAAGAVIIITLIIYVRFW). Residues 214 to 215 (WL) are Lumenal-facing.

This sequence belongs to the synaptobrevin family. In terms of assembly, component of 2 distinct SNARE complexes.

The protein localises to the endoplasmic reticulum membrane. It is found in the endoplasmic reticulum-Golgi intermediate compartment membrane. Its subcellular location is the golgi apparatus. The protein resides in the cis-Golgi network membrane. It localises to the trans-Golgi network membrane. The protein localises to the melanosome. Its function is as follows. SNARE involved in targeting and fusion of ER-derived transport vesicles with the Golgi complex as well as Golgi-derived retrograde transport vesicles with the ER. The sequence is that of Vesicle-trafficking protein SEC22b-A from Danio rerio (Zebrafish).